A 126-amino-acid chain; its full sequence is Small ribosomal subunit protein uS13 (126 aa).

The tract at residues 92 to 126 is disordered; the sequence is HRRGLPVRGQRTKTNARTRKGPKKTVAGKKKATRK.

It belongs to the universal ribosomal protein uS13 family. Part of the 30S ribosomal subunit. Forms a loose heterodimer with protein S19. Forms two bridges to the 50S subunit in the 70S ribosome.

In terms of biological role, located at the top of the head of the 30S subunit, it contacts several helices of the 16S rRNA. In the 70S ribosome it contacts the 23S rRNA (bridge B1a) and protein L5 of the 50S subunit (bridge B1b), connecting the 2 subunits; these bridges are implicated in subunit movement. Contacts the tRNAs in the A and P-sites. This is Small ribosomal subunit protein uS13 from Deinococcus radiodurans (strain ATCC 13939 / DSM 20539 / JCM 16871 / CCUG 27074 / LMG 4051 / NBRC 15346 / NCIMB 9279 / VKM B-1422 / R1).